Consider the following 1029-residue polypeptide: E3 ubiquitin-protein ligase UPL6 (1029 aa).

Residues 1–20 are disordered; it reads MFFSGDPSTRKRVDLGGRST. A compositionally biased stretch (basic and acidic residues) spans 8–20; sequence STRKRVDLGGRST. Residues 45-74 enclose the IQ domain; sequence QNSAALKIQKFFRGRRSMAIERSKVRHDFC. One can recognise an HECT domain in the interval 688–1029; sequence SEDDLRSSIR…ISAEAGFDLS (342 aa). The Glycyl thioester intermediate role is filled by Cys997.

It belongs to the UPL family.

It carries out the reaction S-ubiquitinyl-[E2 ubiquitin-conjugating enzyme]-L-cysteine + [acceptor protein]-L-lysine = [E2 ubiquitin-conjugating enzyme]-L-cysteine + N(6)-ubiquitinyl-[acceptor protein]-L-lysine.. It participates in protein modification; protein ubiquitination. Its function is as follows. Probable E3 ubiquitin-protein ligase which mediates ubiquitination and subsequent proteasomal degradation of target proteins. The sequence is that of E3 ubiquitin-protein ligase UPL6 (UPL6) from Arabidopsis thaliana (Mouse-ear cress).